A 977-amino-acid chain; its full sequence is Receptor protein-tyrosine kinase CEPR2 (977 aa).

Residues 1–31 form the signal peptide; sequence MSRRPDLLRGSVVATVAATFLLFIFPPNVES. Over 32–620 the chain is Extracellular; sequence TVEKQALFRF…NVKRNSSLDG (589 aa). Residue asparagine 85 is glycosylated (N-linked (GlcNAc...) asparagine). 20 LRR repeats span residues 97–121, 122–146, 148–167, 168–192, 193–217, 219–241, 242–265, 266–288, 290–312, 313–338, 340–361, 363–385, 386–409, 411–433, 434–457, 458–481, 482–504, 506–529, 530–553, and 555–576; these read LTKL…IVNC, KNLK…PLKS, EILD…WIGN, MNQL…SIGG, LKKL…IFDL, ALDT…ISRL, VNLT…IKNL, TRLR…ELGV, KELR…GFGD, LSHL…GRFS, LDTV…LCQN, KLQF…YGEC, KSLL…FWSL, LAKM…IGLS, TELS…LGRL, TNIE…VGDL, KELS…ELKN, VKLV…LSQI, ASLN…LVKL, and LSFI…LLAV. Asparagine 128 is a glycosylation site (N-linked (GlcNAc...) asparagine). Residue asparagine 205 is glycosylated (N-linked (GlcNAc...) asparagine). N-linked (GlcNAc...) asparagine glycans are attached at residues asparagine 243, asparagine 251, and asparagine 264. N-linked (GlcNAc...) asparagine glycosylation is found at asparagine 301 and asparagine 325. Residues asparagine 469 and asparagine 491 are each glycosylated (N-linked (GlcNAc...) asparagine). A glycan (N-linked (GlcNAc...) asparagine) is linked at asparagine 615. The helical transmembrane segment at 621 to 641 threads the bilayer; sequence TLLFLALAIVVVVLVSGLFAL. Residues 642–977 are Cytoplasmic-facing; that stretch reads RYRVVKIREL…SQDTTGKITV (336 aa). The 283-residue stretch at 683-965 folds into the Protein kinase domain; that stretch reads LDEDHVIGSG…RKLDDADPCV (283 aa). ATP contacts are provided by residues 689–697 and lysine 712; that span reads IGSGSAGKV. A Phosphotyrosine modification is found at tyrosine 801. Residue aspartate 814 is the Proton acceptor of the active site. Residue serine 846 is modified to Phosphoserine. Residues tyrosine 854 and tyrosine 861 each carry the phosphotyrosine modification.

The protein belongs to the protein kinase superfamily. Ser/Thr protein kinase family. As to quaternary structure, interacts with the root-derived peptide CEP1. Binds to the ammonium transporter AMT1-1. As to expression, expressed in mature leaves, primary roots, and the root tips of both primary and lateral roots.

It is found in the cell membrane. It catalyses the reaction L-tyrosyl-[protein] + ATP = O-phospho-L-tyrosyl-[protein] + ADP + H(+). Receptor kinase involved in the perception of C-terminally encoded plant signaling peptide (CEP) and subsequent regulation of root and shoot development. Together with CEPR1, mediates systemic nitrogen (N)-demand signaling upon the perception of root-derived peptides (e.g. CEP1) via the up-regulation of genes involved in N uptake and assimilation pathways. This chain is Receptor protein-tyrosine kinase CEPR2, found in Arabidopsis thaliana (Mouse-ear cress).